The following is a 103-amino-acid chain: UPF0235 protein RHECIAT_CH0004196 (103 aa).

This sequence belongs to the UPF0235 family.

The protein is UPF0235 protein RHECIAT_CH0004196 of Rhizobium etli (strain CIAT 652).